The sequence spans 785 residues: uncharacterized protein (785 aa).

In terms of domain architecture, DOD-type homing endonuclease spans 293 to 421 (LVGYFLSEGY…LRLISLRLGF (129 aa)).

In terms of processing, this protein undergoes a protein self splicing that involves a post-translational excision of the intervening region (intein) followed by peptide ligation.

This is an uncharacterized protein from Methanocaldococcus jannaschii (strain ATCC 43067 / DSM 2661 / JAL-1 / JCM 10045 / NBRC 100440) (Methanococcus jannaschii).